The sequence spans 497 residues: Glycerol kinase (497 aa).

T12 contacts ADP. T12, T13, and S14 together coordinate ATP. T12 lines the sn-glycerol 3-phosphate pocket. R16 lines the ADP pocket. Sn-glycerol 3-phosphate-binding residues include R82, E83, Y133, and D243. Residues R82, E83, Y133, D243, and Q244 each contribute to the glycerol site. T265 and G308 together coordinate ADP. ATP is bound by residues T265, G308, Q312, and G409. Residue G409 coordinates ADP.

The protein belongs to the FGGY kinase family.

It catalyses the reaction glycerol + ATP = sn-glycerol 3-phosphate + ADP + H(+). It participates in polyol metabolism; glycerol degradation via glycerol kinase pathway; sn-glycerol 3-phosphate from glycerol: step 1/1. Its activity is regulated as follows. Inhibited by fructose 1,6-bisphosphate (FBP). Functionally, key enzyme in the regulation of glycerol uptake and metabolism. Catalyzes the phosphorylation of glycerol to yield sn-glycerol 3-phosphate. The sequence is that of Glycerol kinase from Dichelobacter nodosus (strain VCS1703A).